The chain runs to 357 residues: Peptide chain release factor 1 (357 aa).

Glutamine 233 is modified (N5-methylglutamine).

This sequence belongs to the prokaryotic/mitochondrial release factor family. Post-translationally, methylated by PrmC. Methylation increases the termination efficiency of RF1.

Its subcellular location is the cytoplasm. Functionally, peptide chain release factor 1 directs the termination of translation in response to the peptide chain termination codons UAG and UAA. This Enterococcus faecalis (strain ATCC 700802 / V583) protein is Peptide chain release factor 1.